A 433-amino-acid chain; its full sequence is Serine--tRNA ligase (433 aa).

239-241 (TAE) provides a ligand contact to L-serine. Residue 270–272 (RSE) coordinates ATP. L-serine is bound at residue glutamate 293. Position 357 to 360 (357 to 360 (EISS)) interacts with ATP. L-serine is bound at residue serine 393.

Belongs to the class-II aminoacyl-tRNA synthetase family. Type-1 seryl-tRNA synthetase subfamily. In terms of assembly, homodimer. The tRNA molecule binds across the dimer.

The protein resides in the cytoplasm. It catalyses the reaction tRNA(Ser) + L-serine + ATP = L-seryl-tRNA(Ser) + AMP + diphosphate + H(+). The enzyme catalyses tRNA(Sec) + L-serine + ATP = L-seryl-tRNA(Sec) + AMP + diphosphate + H(+). Its pathway is aminoacyl-tRNA biosynthesis; selenocysteinyl-tRNA(Sec) biosynthesis; L-seryl-tRNA(Sec) from L-serine and tRNA(Sec): step 1/1. Its function is as follows. Catalyzes the attachment of serine to tRNA(Ser). Is also able to aminoacylate tRNA(Sec) with serine, to form the misacylated tRNA L-seryl-tRNA(Sec), which will be further converted into selenocysteinyl-tRNA(Sec). This chain is Serine--tRNA ligase, found in Sorangium cellulosum (strain So ce56) (Polyangium cellulosum (strain So ce56)).